Reading from the N-terminus, the 294-residue chain is MHPRFQTAFAQLADNLQSALAPILADHHFPAMLTAEQVSTLKNTARLDEDALAFALLPLAAACARTDLSHFNVGAIARGVSGNWYFGANMEFLGATMQQTVHAEQSAISHAWLRGEKGLAAVTVNYTPCGHCRQFMNELNSGLDLRIHLPGRAPHTLRDYLPDAFGPKDLEIKTLLMDEQDHGFTLTGDTLTQAAITAANKSHMPYSHSPSGVALECKDGRIFTGSYAENAAFNPTLPPLQGALNLLSLNGYDYADIQRAILAEKGDAALIQWDATAATLKALGCHNIDRVLLG.

CMP/dCMP-type deaminase domains lie at 48 to 168 (DEDA…FGPK) and 186 to 294 (LTGD…VLLG). 89-91 (NME) is a substrate binding site. Residue H102 coordinates Zn(2+). E104 functions as the Proton donor in the catalytic mechanism. Zn(2+) contacts are provided by C129 and C132.

This sequence belongs to the cytidine and deoxycytidylate deaminase family. Homodimer. Zn(2+) is required as a cofactor.

It carries out the reaction cytidine + H2O + H(+) = uridine + NH4(+). It catalyses the reaction 2'-deoxycytidine + H2O + H(+) = 2'-deoxyuridine + NH4(+). In terms of biological role, this enzyme scavenges exogenous and endogenous cytidine and 2'-deoxycytidine for UMP synthesis. This chain is Cytidine deaminase, found in Salmonella paratyphi A (strain ATCC 9150 / SARB42).